We begin with the raw amino-acid sequence, 168 residues long: Small ribosomal subunit protein uS5 (168 aa).

Residues 14–77 (FEERVVSINR…EAAKKNLITV (64 aa)) enclose the S5 DRBM domain.

This sequence belongs to the universal ribosomal protein uS5 family. In terms of assembly, part of the 30S ribosomal subunit. Contacts proteins S4 and S8.

Its function is as follows. With S4 and S12 plays an important role in translational accuracy. Located at the back of the 30S subunit body where it stabilizes the conformation of the head with respect to the body. This chain is Small ribosomal subunit protein uS5, found in Lactococcus lactis subsp. cremoris (strain MG1363).